A 148-amino-acid chain; its full sequence is uncharacterized protein (148 aa).

[4Fe-4S] cluster contacts are provided by Cys21, Cys24, Cys88, and Cys117.

The protein belongs to the complex I 20 kDa subunit family. The cofactor is [4Fe-4S] cluster.

This is an uncharacterized protein from Methanocaldococcus jannaschii (strain ATCC 43067 / DSM 2661 / JAL-1 / JCM 10045 / NBRC 100440) (Methanococcus jannaschii).